The sequence spans 151 residues: Conidium-specific protein (151 aa).

The disordered stretch occupies residues 1–72 (MAKPHCSSRS…FSGDPDSEVE (72 aa)). The segment covering 48–60 (RKDNSADKGDTLR) has biased composition (basic and acidic residues).

The protein is Conidium-specific protein (SpoC1-C1D) of Emericella nidulans (strain FGSC A4 / ATCC 38163 / CBS 112.46 / NRRL 194 / M139) (Aspergillus nidulans).